The primary structure comprises 194 residues: MEEKLKKTKIIFVVGGPGSGKGTQCEKIVQKYGYTHLSTGDLLRAEVSSGSARGKMLSEIMEKGQLVPLETVLDMLRDAMVAKVDTSKGFLIDGYPREVQQGEEFERRIAQPTLLLYVDAGPETMTKRLLKRGETSGRVDDNEETIKKRLETYYKATEPVIAFYEKRGIVRKVNAEGSVDNVFSQVCTHLDALK.

Methionine 1 bears the N-acetylmethionine mark. An ATP-binding site is contributed by 18–23 (GSGKGT). At serine 38 the chain carries Phosphoserine. The segment at 38-67 (STGDLLRAEVSSGSARGKMLSEIMEKGQLV) is NMP. Residues threonine 39, arginine 44, 65–67 (QLV), 94–97 (GYPR), and glutamine 101 contribute to the AMP site. The tract at residues 131–141 (KRGETSGRVDD) is LID. Arginine 132 provides a ligand contact to ATP. AMP contacts are provided by arginine 138 and arginine 149. An ATP-binding site is contributed by glycine 177.

It belongs to the adenylate kinase family. AK1 subfamily. Monomer. Mg(2+) serves as cofactor.

It localises to the cytoplasm. It carries out the reaction a ribonucleoside 5'-phosphate + ATP = a ribonucleoside 5'-diphosphate + ADP. The catalysed reaction is AMP + ATP = 2 ADP. It catalyses the reaction dAMP + ATP = dADP + ADP. The enzyme catalyses dATP + AMP = dADP + ADP. It carries out the reaction dAMP + dATP = 2 dADP. The catalysed reaction is a 2'-deoxyribonucleoside 5'-diphosphate + ATP = a 2'-deoxyribonucleoside 5'-triphosphate + ADP. It catalyses the reaction a ribonucleoside 5'-diphosphate + ATP = a ribonucleoside 5'-triphosphate + ADP. The enzyme catalyses CDP + GTP = CTP + GDP. It carries out the reaction GDP + ATP = GTP + ADP. The catalysed reaction is UDP + ATP = UTP + ADP. It catalyses the reaction GTP + UDP = UTP + GDP. The enzyme catalyses dTDP + GTP = dTTP + GDP. It carries out the reaction dCDP + GTP = dCTP + GDP. The catalysed reaction is dGDP + ATP = dGTP + ADP. It catalyses the reaction dADP + GTP = dATP + GDP. The enzyme catalyses thiamine diphosphate + ADP = thiamine triphosphate + AMP. Its function is as follows. Catalyzes the reversible transfer of the terminal phosphate group between ATP and AMP. Also displays broad nucleoside diphosphate kinase activity. Plays an important role in cellular energy homeostasis and in adenine nucleotide metabolism. Also catalyzes at a very low rate the synthesis of thiamine triphosphate (ThTP) from thiamine diphosphate (ThDP) and ADP. The protein is Adenylate kinase isoenzyme 1 of Bos taurus (Bovine).